The primary structure comprises 117 residues: Immunoglobulin heavy variable 1-45 (117 aa).

The N-terminal stretch at Met1 to Ser19 is a signal peptide. Residues Gln20–Ser44 are framework-1. An Ig-like domain is found at Gln20–Arg117. A disulfide bond links Cys41 and Cys115. The segment at Gly45–Tyr52 is complementarity-determining-1. The tract at residues Leu53–Trp69 is framework-2. A complementarity-determining-2 region spans residues Ile70–Thr77. Residues Asn78 to Cys115 form a framework-3 region. A complementarity-determining-3 region spans residues Ala116–Arg117.

In terms of assembly, immunoglobulins are composed of two identical heavy chains and two identical light chains; disulfide-linked.

The protein resides in the secreted. It is found in the cell membrane. V region of the variable domain of immunoglobulin heavy chains that participates in the antigen recognition. Immunoglobulins, also known as antibodies, are membrane-bound or secreted glycoproteins produced by B lymphocytes. In the recognition phase of humoral immunity, the membrane-bound immunoglobulins serve as receptors which, upon binding of a specific antigen, trigger the clonal expansion and differentiation of B lymphocytes into immunoglobulins-secreting plasma cells. Secreted immunoglobulins mediate the effector phase of humoral immunity, which results in the elimination of bound antigens. The antigen binding site is formed by the variable domain of one heavy chain, together with that of its associated light chain. Thus, each immunoglobulin has two antigen binding sites with remarkable affinity for a particular antigen. The variable domains are assembled by a process called V-(D)-J rearrangement and can then be subjected to somatic hypermutations which, after exposure to antigen and selection, allow affinity maturation for a particular antigen. The protein is Immunoglobulin heavy variable 1-45 of Homo sapiens (Human).